Reading from the N-terminus, the 450-residue chain is Probable helicase D10 (450 aa).

One can recognise a Helicase ATP-binding domain in the interval 95 to 240; sequence PIYEECDDTC…MFKDFFGYKI (146 aa). 108-115 is a binding site for ATP; sequence GKPGFGKT. The short motif at 193 to 196 is the DEAH box element; that stretch reads DEVH. The 151-residue stretch at 289–439 folds into the Helicase C-terminal domain; the sequence is NLAHLYVNMG…TITMTPEKAV (151 aa).

The catalysed reaction is ATP + H2O = ADP + phosphate + H(+). The chain is Probable helicase D10 (D10) from Escherichia phage T5 (Enterobacteria phage T5).